A 418-amino-acid chain; its full sequence is MTIFEELKARGLIFQTTDEEALVKAFEEGPVSFYTGYDPTADSLHLGHLVAILTSRRLQLAGHKPYALVGGATGLIGDPSFKDAERSLQTKETVEGWVEKIQGQLSRFLDFENGDNKAVMVNNYDWFGSVSFIDFLRDVGKYFTVNYMMSKESVKKRIETGISYTEFAYQIMQGYDFYELNAKYGVTLQIGGSDQWGNMTAGTELLRRKADKSGHVITVPLITDSTGKKFGKSEGNAVWLDATKTTPYEMYQFWLNVMDDDAVRFLKIFTFLSLEEIEEIGKEFDQARHQRLAQKVLAREVVTLVHGKEAYEQAVHITEQLFAGNLKALSARDLKVALNGVPTYEISADENLNIVELLVNAKISPSKRQAREDVQNGAIYINGERVQDLDYTLSDTDKIDNEITVIRRGKKKNFVLTY.

L-tyrosine is bound at residue Y34. The 'HIGH' region motif lies at P39 to H48. Y169 and Q173 together coordinate L-tyrosine. The short motif at K229 to S233 is the 'KMSKS' region element. Position 232 (K232) interacts with ATP. The S4 RNA-binding domain maps to L352–Y418.

The protein belongs to the class-I aminoacyl-tRNA synthetase family. TyrS type 1 subfamily. As to quaternary structure, homodimer.

Its subcellular location is the cytoplasm. It carries out the reaction tRNA(Tyr) + L-tyrosine + ATP = L-tyrosyl-tRNA(Tyr) + AMP + diphosphate + H(+). Its function is as follows. Catalyzes the attachment of tyrosine to tRNA(Tyr) in a two-step reaction: tyrosine is first activated by ATP to form Tyr-AMP and then transferred to the acceptor end of tRNA(Tyr). In Streptococcus thermophilus (strain CNRZ 1066), this protein is Tyrosine--tRNA ligase 1.